We begin with the raw amino-acid sequence, 473 residues long: Photosystem II CP43 reaction center protein (473 aa).

Positions 1 to 14 (MKTLYSLRRFYHVE) are excised as a propeptide. N-acetylthreonine is present on T15. Phosphothreonine is present on T15. 5 helical membrane passes run 69-93 (LFEV…PHLA), 134-155 (LIGP…RDKN), 178-200 (KAIY…RIID), 255-275 (KPFA…LSYS), and 291-312 (WYNN…ASQS). Residue E367 participates in [CaMn4O5] cluster binding. The helical transmembrane segment at 447-471 (RARAAAAGFEKGINRENEPVLTLRP) threads the bilayer.

This sequence belongs to the PsbB/PsbC family. PsbC subfamily. As to quaternary structure, PSII is composed of 1 copy each of membrane proteins PsbA, PsbB, PsbC, PsbD, PsbE, PsbF, PsbH, PsbI, PsbJ, PsbK, PsbL, PsbM, PsbT, PsbX, PsbY, PsbZ, Psb30/Ycf12, at least 3 peripheral proteins of the oxygen-evolving complex and a large number of cofactors. It forms dimeric complexes. Requires Binds multiple chlorophylls and provides some of the ligands for the Ca-4Mn-5O cluster of the oxygen-evolving complex. It may also provide a ligand for a Cl- that is required for oxygen evolution. PSII binds additional chlorophylls, carotenoids and specific lipids. as cofactor.

It is found in the plastid. The protein resides in the chloroplast thylakoid membrane. One of the components of the core complex of photosystem II (PSII). It binds chlorophyll and helps catalyze the primary light-induced photochemical processes of PSII. PSII is a light-driven water:plastoquinone oxidoreductase, using light energy to abstract electrons from H(2)O, generating O(2) and a proton gradient subsequently used for ATP formation. In Guillardia theta (Cryptophyte), this protein is Photosystem II CP43 reaction center protein.